A 275-amino-acid chain; its full sequence is Large ribosomal subunit protein uL2 (275 aa).

A disordered region spans residues Val223–Lys275.

This sequence belongs to the universal ribosomal protein uL2 family. As to quaternary structure, part of the 50S ribosomal subunit. Forms a bridge to the 30S subunit in the 70S ribosome.

Functionally, one of the primary rRNA binding proteins. Required for association of the 30S and 50S subunits to form the 70S ribosome, for tRNA binding and peptide bond formation. It has been suggested to have peptidyltransferase activity; this is somewhat controversial. Makes several contacts with the 16S rRNA in the 70S ribosome. This Shewanella halifaxensis (strain HAW-EB4) protein is Large ribosomal subunit protein uL2.